Consider the following 214-residue polypeptide: 3-isopropylmalate dehydratase small subunit (214 aa).

The protein belongs to the LeuD family. LeuD type 1 subfamily. In terms of assembly, heterodimer of LeuC and LeuD.

It carries out the reaction (2R,3S)-3-isopropylmalate = (2S)-2-isopropylmalate. The protein operates within amino-acid biosynthesis; L-leucine biosynthesis; L-leucine from 3-methyl-2-oxobutanoate: step 2/4. Catalyzes the isomerization between 2-isopropylmalate and 3-isopropylmalate, via the formation of 2-isopropylmaleate. The protein is 3-isopropylmalate dehydratase small subunit of Pseudomonas putida (strain GB-1).